Consider the following 346-residue polypeptide: Tetraacyldisaccharide 4'-kinase (346 aa).

ATP is bound at residue 62–69; it reads TAGGTGKT.

Belongs to the LpxK family.

The enzyme catalyses a lipid A disaccharide + ATP = a lipid IVA + ADP + H(+). It functions in the pathway glycolipid biosynthesis; lipid IV(A) biosynthesis; lipid IV(A) from (3R)-3-hydroxytetradecanoyl-[acyl-carrier-protein] and UDP-N-acetyl-alpha-D-glucosamine: step 6/6. Functionally, transfers the gamma-phosphate of ATP to the 4'-position of a tetraacyldisaccharide 1-phosphate intermediate (termed DS-1-P) to form tetraacyldisaccharide 1,4'-bis-phosphate (lipid IVA). The polypeptide is Tetraacyldisaccharide 4'-kinase (Xanthomonas oryzae pv. oryzae (strain MAFF 311018)).